The sequence spans 517 residues: 3-hydroxyphenylacetate 6-hydroxylase (517 aa).

A heme-binding site is contributed by C449.

This sequence belongs to the cytochrome P450 family.

The catalysed reaction is 3-hydroxyphenylacetate + NADH + O2 + H(+) = homogentisate + NAD(+) + H2O. It catalyses the reaction 3-hydroxyphenylacetate + NADPH + O2 + H(+) = homogentisate + NADP(+) + H2O. The enzyme catalyses 3,4-dihydroxyphenylacetate + NADH + O2 + H(+) = 2,4,5-trihydroxyphenylacetate + NAD(+) + H2O. It carries out the reaction 3,4-dihydroxyphenylacetate + NADPH + O2 + H(+) = 2,4,5-trihydroxyphenylacetate + NADP(+) + H2O. Its pathway is aromatic compound metabolism; phenylacetate degradation. Its function is as follows. Catalyzes the hydroxylation of 3-hydroxyphenylacetate and 3,4-dihydroxyphenylacetate to 2,5-dihydroxyphenylacetate (homogentisate) and 2,4,5-trihydroxyphenylacetate, respectively. Both of these compounds are used as substrate by homogentisate dioxygenase in the homogentisate pathway. The homogentisate pathway is used to catabolize phenylacetate and use it as a carbon source. Can also catalyze the hydroxylation of phenylacetate to 2-hydroxyphenylacetate at low efficiency to compensate for loss of phacA. This chain is 3-hydroxyphenylacetate 6-hydroxylase (phacB), found in Emericella nidulans (Aspergillus nidulans).